The sequence spans 310 residues: Beta-carotene 3-hydroxylase 1, chloroplastic (310 aa).

A chloroplast-targeting transit peptide spans 1 to 51; that stretch reads MAAGLSTAVTFKPLHRSFSSSSTDFRLRLPKSLSGFSPSLRFKRFSVCYVV. Helical transmembrane passes span 98–118 and 132–152; these read YLIA…MAVY and MLEM…MEFW. Residues 145–272 enclose the Fatty acid hydroxylase domain; it reads AAVGMEFWAR…KFNGVPYGLF (128 aa). Positions 157 to 162 match the Histidine box-1 motif; that stretch reads HRALWH. A Histidine box-2 motif is present at residues 169–173; sequence HESHH. 2 consecutive transmembrane segments (helical) span residues 183–203 and 208–228; these read NDVF…YGFF and VPGL…AYMF. The short motif at 230 to 235 is the Histidine box-3 element; that stretch reads HDGLVH. The Histidine box-4 motif lies at 256 to 260; that stretch reads HQLHH.

It belongs to the sterol desaturase family. In terms of assembly, homodimer. In terms of tissue distribution, expressed in leaves, flowers, stems, roots and siliques.

The protein resides in the plastid. It is found in the chloroplast membrane. It carries out the reaction all-trans-beta-carotene + 4 reduced [2Fe-2S]-[ferredoxin] + 2 O2 + 4 H(+) = all-trans-zeaxanthin + 4 oxidized [2Fe-2S]-[ferredoxin] + 2 H2O. Its function is as follows. Nonheme diiron monooxygenase involved in the biosynthesis of xanthophylls. Specific for beta-ring hydroxylations of beta-carotene. Also has a low activity toward the beta- and epsilon-rings of alpha-carotene. No activity with acyclic carotenoids such as lycopene and neurosporene. Uses ferredoxin as an electron donor. This is Beta-carotene 3-hydroxylase 1, chloroplastic (BETA-OHASE 1) from Arabidopsis thaliana (Mouse-ear cress).